The chain runs to 384 residues: Xylose repressor (384 aa).

Positions 29–48 (RAKLSEMTGLNKSTVSSQVN) form a DNA-binding region, H-T-H motif.

Belongs to the ROK (NagC/XylR) family.

Its function is as follows. Transcriptional repressor of xylose-utilizing enzymes. The protein is Xylose repressor (xylR) of Bacillus spizizenii (strain ATCC 23059 / NRRL B-14472 / W23) (Bacillus subtilis subsp. spizizenii).